The following is a 270-amino-acid chain: Phosphate import ATP-binding protein PstB 2 (270 aa).

In terms of domain architecture, ABC transporter spans 25–265; it reads LQAKDINIYY…PEKKQTEDYI (241 aa). 57-64 contacts ATP; that stretch reads GPSGCGKS.

It belongs to the ABC transporter superfamily. Phosphate importer (TC 3.A.1.7) family. As to quaternary structure, the complex is composed of two ATP-binding proteins (PstB), two transmembrane proteins (PstC and PstA) and a solute-binding protein (PstS).

It localises to the cell membrane. It catalyses the reaction phosphate(out) + ATP + H2O = ADP + 2 phosphate(in) + H(+). Part of the ABC transporter complex PstSACB involved in phosphate import. Responsible for energy coupling to the transport system. This Shouchella clausii (strain KSM-K16) (Alkalihalobacillus clausii) protein is Phosphate import ATP-binding protein PstB 2.